A 91-amino-acid polypeptide reads, in one-letter code: Small ribosomal subunit protein uS19 (91 aa).

Residues 72-91 (GEFSPTRTYTGHGSEKGKKK) are disordered.

Belongs to the universal ribosomal protein uS19 family.

In terms of biological role, protein S19 forms a complex with S13 that binds strongly to the 16S ribosomal RNA. This is Small ribosomal subunit protein uS19 from Mycoplasma mobile (strain ATCC 43663 / 163K / NCTC 11711) (Mesomycoplasma mobile).